We begin with the raw amino-acid sequence, 401 residues long: Enolase (401 aa).

Gln-154 serves as a coordination point for (2R)-2-phosphoglycerate. Residue Glu-196 is the Proton donor of the active site. The Mg(2+) site is built by Asp-232, Glu-275, and Asp-302. (2R)-2-phosphoglycerate contacts are provided by Lys-327, Arg-356, Ser-357, and Lys-378. The Proton acceptor role is filled by Lys-327.

Belongs to the enolase family. Mg(2+) is required as a cofactor.

It is found in the cytoplasm. Its subcellular location is the secreted. The protein resides in the cell surface. It catalyses the reaction (2R)-2-phosphoglycerate = phosphoenolpyruvate + H2O. Its pathway is carbohydrate degradation; glycolysis; pyruvate from D-glyceraldehyde 3-phosphate: step 4/5. Catalyzes the reversible conversion of 2-phosphoglycerate (2-PG) into phosphoenolpyruvate (PEP). It is essential for the degradation of carbohydrates via glycolysis. The sequence is that of Enolase from Haloquadratum walsbyi (strain DSM 16790 / HBSQ001).